Consider the following 363-residue polypeptide: Inactive CLIP domain-containing serine protease A8 (363 aa).

The signal sequence occupies residues 1-25 (MPSWWCCCCLVVLLYAQRMIVPSSA). The Clip domain occupies 33–82 (LQECPGGFCSPKYLCPNGTYNEANAQNQEIIMLRFGEEDVCQDYMQVCCS). 3 disulfides stabilise this stretch: Cys36–Cys80, Cys41–Cys73, and Cys47–Cys81. Residues Asn49, Asn83, Asn117, and Asn166 are each glycosylated (N-linked (GlcNAc...) asparagine). The region spanning 114 to 360 (VEGNRTYAQY…FVTWINATIE (247 aa)) is the Peptidase S1 domain. 3 disulfides stabilise this stretch: Cys245–Cys317, Cys276–Cys297, and Cys307–Cys336. Residues Asn319 and Asn356 are each glycosylated (N-linked (GlcNAc...) asparagine).

This sequence belongs to the peptidase S1 family. CLIP subfamily. Heterodimer of a light chain and a heavy chain; disulfide-linked. In terms of processing, secreted as a full-length protein. Proteolytically cleaved into two chains which remain covalently linked. Cleavage is induced by Gram-positive or Gram-negative bacteria infection.

The protein localises to the secreted. Its function is as follows. Inactive serine protease which plays an essential role in the innate immune response against bacteria, fungi and protozoa infection by activating the melanization cascade. In the melanization cascade, acts downstream of TEP1 and SPCLIP1 to promote CLIPA28 and CLIPC9 proteolytic cleavage and CLIPC9 recruitment to microbial surfaces. In the resistant strain L3-5, required for the melanization of killed parasite P.berghei ookinetes which results in their clearance. In the susceptible strain G3, appears to be dispensable for ookinete elimination which occurs by lysis. Required for the melanization of Gram-positive and Gram-negative bacteria. During the late stage of fungus B.bassiana-mediated infection, required for the initiation of hyphae melanization by promoting prophenoloxidase PPO activation. The chain is Inactive CLIP domain-containing serine protease A8 from Anopheles gambiae (African malaria mosquito).